A 674-amino-acid chain; its full sequence is MTLVEVKDDKLEIKPVRLRKEKYKAQLENKIFNEDELYLFHEGRNYNAYNFMGAHFTSENRKRGVRFTLWAPRAKNIFLVGDFSNWETKEENKLNRINETGLWSIFIPRLKEGIKYKYYIEQEDGKAVLKADPYGIYSEVRPNTASILCEKTKIRWSDKKWLNKREATNYFESPINIYELHLGSWKRKDEDEFLSYDELSVVLPKYVKEMGYTHVEFMPLNEHPLDASWGYQVTGYYSVTSRYGDIKGLKRLINALHKNDIGVILDWVPGHFCKDEQGLYMFDGTPTYEYEEKWKADNKGWGTFNFDLGKPEVKSFLISNAFYFINEFHIDGLRVDAVSNMLYLNYGRNHGEWIPNIYGGNENLEAIQFIKELNEAIKTYSKGVITIAEESTSWPNVTNDTEYGGLGFDFKWNMGWMNDTLEYNELDPIYRKYHHNKLTFPMMYNHSEKFILPISHDEVVHGKKSLIDKMQGDYWNKFSNLRAYMAYMYGHPGKKLMFMGCEFGQFIEWREYEELEWKLIDKFDMHRKTHNFFKDLNNFYKNNSELWELDYDGDGFQWIDADNNEQSIYIFIRKSKNIEKYKIFVCNFTPMVYYDFNIGVPEKGVYREIFNTDKKEYGGSGQVIKGNLFSRKGWCHNQPYTLTIKVPPMAVSVFERIIEENKTEEKIVKEDKYI.

Catalysis depends on aspartate 336, which acts as the Nucleophile. The active-site Proton donor is the glutamate 389.

This sequence belongs to the glycosyl hydrolase 13 family. GlgB subfamily. As to quaternary structure, monomer.

It carries out the reaction Transfers a segment of a (1-&gt;4)-alpha-D-glucan chain to a primary hydroxy group in a similar glucan chain.. The protein operates within glycan biosynthesis; glycogen biosynthesis. Its function is as follows. Catalyzes the formation of the alpha-1,6-glucosidic linkages in glycogen by scission of a 1,4-alpha-linked oligosaccharide from growing alpha-1,4-glucan chains and the subsequent attachment of the oligosaccharide to the alpha-1,6 position. The chain is 1,4-alpha-glucan branching enzyme GlgB 1 from Clostridium perfringens (strain SM101 / Type A).